The following is a 419-amino-acid chain: Argininosuccinate synthase (419 aa).

Residues 9 to 17 (AYSGGLDTS) and alanine 35 contribute to the ATP site. Residues tyrosine 86 and serine 91 each coordinate L-citrulline. 114-122 (AHGATGKGN) lines the ATP pocket. 3 residues coordinate L-aspartate: threonine 118, asparagine 122, and aspartate 123. Asparagine 122 contributes to the L-citrulline binding site. Positions 126, 179, 188, 270, and 282 each coordinate L-citrulline.

It belongs to the argininosuccinate synthase family. Type 1 subfamily. Homotetramer.

The enzyme catalyses L-citrulline + L-aspartate + ATP = 2-(N(omega)-L-arginino)succinate + AMP + diphosphate + H(+). Its pathway is amino-acid biosynthesis; L-arginine biosynthesis; L-arginine from L-ornithine and carbamoyl phosphate: step 2/3. The protein operates within nitrogen metabolism; urea cycle; (N(omega)-L-arginino)succinate from L-aspartate and L-citrulline: step 1/1. The protein is Argininosuccinate synthase of Drosophila melanogaster (Fruit fly).